Reading from the N-terminus, the 340-residue chain is Replication factor C subunit 5 (340 aa).

The residue at position 1 (Met1) is an N-acetylmethionine. 60–67 provides a ligand contact to ATP; it reads GPPGTGKT.

Belongs to the activator 1 small subunits family. Subunit of the RFC complex, an heteropentameric complex consisting of a large subunit RFC1 and four small subunits RFC2, RFC3, RFC4 and RFC5; the RFC complex interacts with PCNA. Forms an heterotetrameric complex with RFC2, RFC3 and RFC4; this complex has ATPase activity but is not stimulated by PCNA. The heterotetramer of subunits RFC2, RFC3, RFC4 and RFC5 interacts with RAD17.

It localises to the nucleus. Subunit of the replication factor C (RFC) complex which acts during elongation of primed DNA templates by DNA polymerases delta and epsilon, and is necessary for ATP-dependent loading of proliferating cell nuclear antigen (PCNA) onto primed DNA. This chain is Replication factor C subunit 5 (RFC5), found in Homo sapiens (Human).